The following is a 344-amino-acid chain: GLIPR1-like protein 2 (344 aa).

An SCP domain is found at 58–192; it reads VNLHNELRGD…IHAAIFICNY (135 aa). The helical transmembrane segment at 254–274 threads the bilayer; the sequence is TFILLLRILCFILCVITVLIV. Acidic residues-rich tracts occupy residues 292-304 and 312-334; these read EESE…EEKE and EMEM…EEET. The tract at residues 292–344 is disordered; it reads EESEAGNEEEEKEEEKKEKEEMEMEIMEMEEEKEEREEEEEETQKEKMEEEEK. Residues 335 to 344 are compositionally biased toward basic and acidic residues; it reads QKEKMEEEEK.

The protein belongs to the CRISP family. In terms of tissue distribution, highly expressed in testis. Detected in prostate, kidney, bladder, lung and bone marrow.

It is found in the membrane. The chain is GLIPR1-like protein 2 (GLIPR1L2) from Homo sapiens (Human).